Here is a 204-residue protein sequence, read N- to C-terminus: Transcriptional regulator GfcR 1 (204 aa).

It belongs to the purine/pyrimidine phosphoribosyltransferase family. GfcR subfamily.

The sequence is that of Transcriptional regulator GfcR 1 from Methanosarcina barkeri (strain Fusaro / DSM 804).